Consider the following 142-residue polypeptide: Large ribosomal subunit protein uL11 (142 aa).

The protein belongs to the universal ribosomal protein uL11 family. As to quaternary structure, part of the ribosomal stalk of the 50S ribosomal subunit. Interacts with L10 and the large rRNA to form the base of the stalk. L10 forms an elongated spine to which L12 dimers bind in a sequential fashion forming a multimeric L10(L12)X complex. In terms of processing, one or more lysine residues are methylated.

In terms of biological role, forms part of the ribosomal stalk which helps the ribosome interact with GTP-bound translation factors. This Aliivibrio fischeri (strain MJ11) (Vibrio fischeri) protein is Large ribosomal subunit protein uL11.